The chain runs to 500 residues: Aspartyl/glutamyl-tRNA(Asn/Gln) amidotransferase subunit B (500 aa).

The protein belongs to the GatB/GatE family. GatB subfamily. Heterotrimer of A, B and C subunits.

It catalyses the reaction L-glutamyl-tRNA(Gln) + L-glutamine + ATP + H2O = L-glutaminyl-tRNA(Gln) + L-glutamate + ADP + phosphate + H(+). It carries out the reaction L-aspartyl-tRNA(Asn) + L-glutamine + ATP + H2O = L-asparaginyl-tRNA(Asn) + L-glutamate + ADP + phosphate + 2 H(+). Its function is as follows. Allows the formation of correctly charged Asn-tRNA(Asn) or Gln-tRNA(Gln) through the transamidation of misacylated Asp-tRNA(Asn) or Glu-tRNA(Gln) in organisms which lack either or both of asparaginyl-tRNA or glutaminyl-tRNA synthetases. The reaction takes place in the presence of glutamine and ATP through an activated phospho-Asp-tRNA(Asn) or phospho-Glu-tRNA(Gln). This Sinorhizobium fredii (strain NBRC 101917 / NGR234) protein is Aspartyl/glutamyl-tRNA(Asn/Gln) amidotransferase subunit B.